The sequence spans 783 residues: Cation/H(+) antiporter 10 (783 aa).

12 helical membrane-spanning segments follow: residues 31 to 51 (VVFG…FFCI), 61 to 81 (IGIS…PQLF), 100 to 120 (IAAL…LMTV), 135 to 155 (VVIG…QNFF), 175 to 195 (AIVI…LLEL), 206 to 226 (ALSA…VASI), 244 to 264 (AVII…QWVI), 276 to 295 (MYIH…FVFF), 300 to 322 (ILGP…ALEA), 356 to 376 (IFFN…ACLA), 389 to 409 (LAVS…YEAV), and 418 to 438 (ATYS…PTVL).

The protein belongs to the monovalent cation:proton antiporter 2 (CPA2) transporter (TC 2.A.37) family. CHX (TC 2.A.37.4) subfamily. As to expression, specifically expressed in pollen.

Its subcellular location is the membrane. May operate as a cation/H(+) antiporter. The sequence is that of Cation/H(+) antiporter 10 (CHX10) from Arabidopsis thaliana (Mouse-ear cress).